Consider the following 421-residue polypeptide: Diaminobutyrate--2-oxoglutarate transaminase (421 aa).

An N6-(pyridoxal phosphate)lysine modification is found at lysine 267.

This sequence belongs to the class-III pyridoxal-phosphate-dependent aminotransferase family. As to quaternary structure, homohexamer. Requires pyridoxal 5'-phosphate as cofactor.

The enzyme catalyses L-2,4-diaminobutanoate + 2-oxoglutarate = L-aspartate 4-semialdehyde + L-glutamate. Its pathway is amine and polyamine biosynthesis; ectoine biosynthesis; L-ectoine from L-aspartate 4-semialdehyde: step 1/3. Catalyzes reversively the conversion of L-aspartate beta-semialdehyde (ASA) to L-2,4-diaminobutyrate (DABA) by transamination with L-glutamate. Seems to use L-glutamate specifically as the amino group donor to ASA, as it is not active with L-alanine, L-glutamine, L-aspartate and L-lysine, and is only poorly active with L-homoserine. In the reverse reaction, gamma-aminobutyric acid (GABA) and L-ornithine can also be used as amino group donors to 2-oxoglutarate, but with a reduced activity compared to that with DABA. The sequence is that of Diaminobutyrate--2-oxoglutarate transaminase (ectB) from Halomonas elongata (strain ATCC 33173 / DSM 2581 / NBRC 15536 / NCIMB 2198 / 1H9).